A 597-amino-acid polypeptide reads, in one-letter code: NADH-quinone oxidoreductase subunit C/D (597 aa).

An NADH dehydrogenase I subunit C region spans residues 1–187; the sequence is MIDENKKKNT…ESFFLDEQKE (187 aa). Residues 211 to 597 form an NADH dehydrogenase I subunit D region; the sequence is DFMFLNLGPN…IDFVMSDVDR (387 aa).

In the N-terminal section; belongs to the complex I 30 kDa subunit family. The protein in the C-terminal section; belongs to the complex I 49 kDa subunit family. In terms of assembly, NDH-1 is composed of 13 different subunits. Subunits NuoB, CD, E, F, and G constitute the peripheral sector of the complex.

It localises to the cell inner membrane. It carries out the reaction a quinone + NADH + 5 H(+)(in) = a quinol + NAD(+) + 4 H(+)(out). Its function is as follows. NDH-1 shuttles electrons from NADH, via FMN and iron-sulfur (Fe-S) centers, to quinones in the respiratory chain. The immediate electron acceptor for the enzyme in this species is believed to be ubiquinone. Couples the redox reaction to proton translocation (for every two electrons transferred, four hydrogen ions are translocated across the cytoplasmic membrane), and thus conserves the redox energy in a proton gradient. The chain is NADH-quinone oxidoreductase subunit C/D from Buchnera aphidicola subsp. Schizaphis graminum (strain Sg).